We begin with the raw amino-acid sequence, 855 residues long: DNA mismatch repair protein MutS (855 aa).

613–620 (GPNMGGKS) serves as a coordination point for ATP.

Belongs to the DNA mismatch repair MutS family.

This protein is involved in the repair of mismatches in DNA. It is possible that it carries out the mismatch recognition step. This protein has a weak ATPase activity. This is DNA mismatch repair protein MutS from Azotobacter vinelandii (strain DJ / ATCC BAA-1303).